Consider the following 131-residue polypeptide: Glycine cleavage system H protein (131 aa).

Residues 24 to 106 (RVTVGISDHA…YGEGWIFVVE (83 aa)) enclose the Lipoyl-binding domain. The residue at position 65 (K65) is an N6-lipoyllysine.

The protein belongs to the GcvH family. The glycine cleavage system is composed of four proteins: P, T, L and H. It depends on (R)-lipoate as a cofactor.

The glycine cleavage system catalyzes the degradation of glycine. The H protein shuttles the methylamine group of glycine from the P protein to the T protein. This Xanthomonas axonopodis pv. citri (strain 306) protein is Glycine cleavage system H protein.